The chain runs to 334 residues: DNA polymerase beta (334 aa).

Residues Lys-60, Leu-62, and Val-65 each contribute to the K(+) site. Na(+) is bound by residues Lys-60, Leu-62, and Val-65. Lys-72 functions as the Nucleophile; Schiff-base intermediate with DNA; for 5'-dRP lyase activity in the catalytic mechanism. Arg-83 bears the Omega-N-methylarginine; by PRMT6 mark. 3 residues coordinate K(+): Thr-101, Val-103, and Ile-106. Residues Thr-101, Val-103, and Ile-106 each coordinate Na(+). Residue Arg-149 participates in a 2'-deoxyribonucleoside 5'-triphosphate binding. Arg-152 is modified (omega-N-methylarginine; by PRMT6). 4 residues coordinate a 2'-deoxyribonucleoside 5'-triphosphate: Ser-180, Arg-183, Gly-189, and Asp-190. The tract at residues 183–192 (RGAESSGDMD) is DNA-binding. Residues Asp-190, Asp-192, and Asp-255 each contribute to the Mg(2+) site.

The protein belongs to the DNA polymerase type-X family. In terms of assembly, monomer. Mg(2+) serves as cofactor. In terms of processing, methylation by PRMT6 stimulates the polymerase activity by enhancing DNA binding and processivity. Ubiquitinated: monoubiquitinated by huwe1/arf-bp1. Monoubiquitinated protein is then the target of stub1/chip, which catalyzes polyubiquitination from monoubiquitin, leading to degradation by the proteasome. usp47 mediates the deubiquitination of monoubiquitinated protein, preventing polyubiquitination by STUB1/CHIP and its subsequent degradation.

It localises to the nucleus. Its subcellular location is the cytoplasm. The enzyme catalyses DNA(n) + a 2'-deoxyribonucleoside 5'-triphosphate = DNA(n+1) + diphosphate. It catalyses the reaction a 5'-end 2'-deoxyribose-2'-deoxyribonucleotide-DNA = (2E,4S)-4-hydroxypenten-2-al-5-phosphate + a 5'-end 5'-phospho-2'-deoxyribonucleoside-DNA + H(+). The catalysed reaction is 2'-deoxyribonucleotide-(2'-deoxyribose 5'-phosphate)-2'-deoxyribonucleotide-DNA = a 3'-end 2'-deoxyribonucleotide-(2,3-dehydro-2,3-deoxyribose 5'-phosphate)-DNA + a 5'-end 5'-phospho-2'-deoxyribonucleoside-DNA + H(+). Its function is as follows. Repair polymerase that plays a key role in base-excision repair. During this process, the damaged base is excised by specific DNA glycosylases, the DNA backbone is nicked at the abasic site by an apurinic/apyrimidic (AP) endonuclease, and POLB removes 5'-deoxyribose-phosphate from the preincised AP site acting as a 5'-deoxyribose-phosphate lyase (5'-dRP lyase); through its DNA polymerase activity, it adds one nucleotide to the 3' end of the arising single-nucleotide gap. Conducts 'gap-filling' DNA synthesis in a stepwise distributive fashion rather than in a processive fashion as for other DNA polymerases. It is also able to cleave sugar-phosphate bonds 3' to an intact AP site, acting as an AP lyase. The protein is DNA polymerase beta (polb) of Xenopus laevis (African clawed frog).